Here is a 231-residue protein sequence, read N- to C-terminus: NifU-like protein 1, chloroplastic (231 aa).

Residues M1–L69 constitute a chloroplast transit peptide.

It belongs to the NifU family. In terms of assembly, homodimer; disulfide-linked. Predominantly expressed in floral stalks and siliques. Expressed in leaves, cauline leaves, flower stalks and flowers (at protein level).

It is found in the plastid. It localises to the chloroplast stroma. Molecular scaffold for [Fe-S] cluster assembly of chloroplastic iron-sulfur proteins. This chain is NifU-like protein 1, chloroplastic (NIFU1), found in Arabidopsis thaliana (Mouse-ear cress).